Here is a 489-residue protein sequence, read N- to C-terminus: MDSSYSVISKTSYVELQKPTVNGKPRNKLLPSDEESFVNDFDDARNGVGGEDADDLDFDVADYPLVHGKSSNQGSGIYGAVFNLTTSIIGAGIMALPATMKVLGLVLGFVLIILMALLSEISVELLVRFSVLYKSKSYGEVVQFALGKTARVLSEICIIVNNGGVLVVYLIIMGDVMSGSLHHIGVLDQWLGNGFWDHRKVLILIVMVIFLAPLCALNKIDSLSVTSAASVALAVVFVVVCFVVATIKLIEGTIDPPRLSPDFGSKQAILDLLVVIPIMSNAYVCHFNVQPIYNELEGRSPHKMNRVGRITTAICVVVYASTAVSGYLLFGKDTESDILTNFDQDLGIRFSSAVNYIVRIGYILHLVLVFPVIHFSLRETVNTLLFEGSPPLSESKKRSLGLTVVLLALIYIGSTMIPNIWTAFKFTGATSAVSLGFTFPALIALRLGKQSNSLSFVERSVSWLMLILAVVVSIVGTIGNIYSLESKSD.

11 consecutive transmembrane segments (helical) span residues 76–96 (GIYG…IMAL), 102–122 (VLGL…SEIS), 156–176 (ICII…MGDV), 201–221 (VLIL…NKID), 227–247 (SAAS…VATI), 269–289 (ILDL…HFNV), 310–330 (ITTA…YLLF), 357–377 (IVRI…HFSL), 404–424 (VVLL…WTAF), 425–445 (KFTG…LIAL), and 461–481 (VSWL…IGNI).

It belongs to the amino acid/polyamine transporter 2 family. Amino acid/auxin permease (AAAP) (TC 2.A.18.6) subfamily.

Its subcellular location is the endoplasmic reticulum membrane. It is found in the vacuole membrane. The sequence is that of Amino acid transporter AVT6E from Arabidopsis thaliana (Mouse-ear cress).